The following is a 307-amino-acid chain: Aspartate carbamoyltransferase catalytic subunit (307 aa).

Arg-54 and Thr-55 together coordinate carbamoyl phosphate. Residue Lys-83 participates in L-aspartate binding. The carbamoyl phosphate site is built by Arg-104, His-132, and Gln-135. L-aspartate contacts are provided by Arg-165 and Arg-228. The carbamoyl phosphate site is built by Leu-267 and Pro-268.

This sequence belongs to the aspartate/ornithine carbamoyltransferase superfamily. ATCase family. In terms of assembly, heterododecamer (2C3:3R2) of six catalytic PyrB chains organized as two trimers (C3), and six regulatory PyrI chains organized as three dimers (R2).

It catalyses the reaction carbamoyl phosphate + L-aspartate = N-carbamoyl-L-aspartate + phosphate + H(+). The protein operates within pyrimidine metabolism; UMP biosynthesis via de novo pathway; (S)-dihydroorotate from bicarbonate: step 2/3. Functionally, catalyzes the condensation of carbamoyl phosphate and aspartate to form carbamoyl aspartate and inorganic phosphate, the committed step in the de novo pyrimidine nucleotide biosynthesis pathway. The polypeptide is Aspartate carbamoyltransferase catalytic subunit (Clostridium botulinum (strain Langeland / NCTC 10281 / Type F)).